The following is a 188-amino-acid chain: Achaete-scute homolog 5 (188 aa).

Positions 80 to 93 (AFIQKRNERERQRV) are basic motif. Positions 80–132 (AFIQKRNERERQRVKCVNEGYARLRGHLPGALTEKRLSKVETLRAAIRYIKYL) constitute a bHLH domain. Residues 94-132 (KCVNEGYARLRGHLPGALTEKRLSKVETLRAAIRYIKYL) form a helix-loop-helix motif region. The interval 139-188 (TPDGAPPPATSPPPAHTGHSNVPQPSSLVAESSGSPFSSSPFLESEEPSL) is disordered. A compositionally biased stretch (pro residues) spans 142-153 (GAPPPATSPPPA). A compositionally biased stretch (polar residues) spans 158-168 (SNVPQPSSLVA). Positions 169–181 (ESSGSPFSSSPFL) are enriched in low complexity.

In terms of assembly, interacts with transcription factor TCF3/E12. As to expression, expressed in teeth (at protein level).

Its subcellular location is the nucleus. Its function is as follows. Transcription factor. Probably binds E-box motifs 5'-CANNTG-3' in complex with transcription factor TCF3/E12. Negatively modulates transcription of target genes such as CDH1/E-cadherin, perhaps by recruiting the PRC2 repressive complex to regulatory elements. Regulates ameloblast development and tooth germ growth, perhaps acting by positively modulating migration of inner enamel epithelium (IEE) cells. Plays a role in enamel formation. This is Achaete-scute homolog 5 from Mus musculus (Mouse).